A 324-amino-acid chain; its full sequence is tRNA U34 carboxymethyltransferase (324 aa).

Residues Lys92, Trp106, Lys111, Gly131, 153 to 155 (DPT), 181 to 182 (IE), Met197, Tyr201, and Arg316 each bind carboxy-S-adenosyl-L-methionine.

It belongs to the class I-like SAM-binding methyltransferase superfamily. CmoB family. As to quaternary structure, homotetramer.

It carries out the reaction carboxy-S-adenosyl-L-methionine + 5-hydroxyuridine(34) in tRNA = 5-carboxymethoxyuridine(34) in tRNA + S-adenosyl-L-homocysteine + H(+). Its function is as follows. Catalyzes carboxymethyl transfer from carboxy-S-adenosyl-L-methionine (Cx-SAM) to 5-hydroxyuridine (ho5U) to form 5-carboxymethoxyuridine (cmo5U) at position 34 in tRNAs. In Methylococcus capsulatus (strain ATCC 33009 / NCIMB 11132 / Bath), this protein is tRNA U34 carboxymethyltransferase.